The chain runs to 57 residues: Potassium channel toxin alpha-KTx 8.7 (57 aa).

An N-terminal signal peptide occupies residues 1–28; sequence MSRLYAIILIALVFNVIMTIMPDMKVEA. 3 cysteine pairs are disulfide-bonded: cysteine 31–cysteine 47, cysteine 34–cysteine 52, and cysteine 38–cysteine 54.

Expressed by the venom gland.

Its subcellular location is the secreted. Inhibits voltage-gated potassium channel rKv1.1/KCNA1 at nanomolar ranges (IC(50)=8.5 nM). The sequence is that of Potassium channel toxin alpha-KTx 8.7 from Mesobuthus eupeus (Lesser Asian scorpion).